Here is a 337-residue protein sequence, read N- to C-terminus: Ketol-acid reductoisomerase (NADP(+)) (337 aa).

The region spanning 1–180 (MQVYYDKDAD…GGTKGGVIET (180 aa)) is the KARI N-terminal Rossmann domain. Residues 24 to 27 (YGSQ), arginine 47, and serine 51 each bind NADP(+). Residue histidine 106 is part of the active site. Residue glycine 132 participates in NADP(+) binding. A KARI C-terminal knotted domain is found at 181-326 (TFREETETDL…AQLRAMMPWI (146 aa)). Mg(2+)-binding residues include aspartate 189, glutamate 193, glutamate 225, and glutamate 229. Serine 250 is a substrate binding site.

The protein belongs to the ketol-acid reductoisomerase family. The cofactor is Mg(2+).

It carries out the reaction (2R)-2,3-dihydroxy-3-methylbutanoate + NADP(+) = (2S)-2-acetolactate + NADPH + H(+). The enzyme catalyses (2R,3R)-2,3-dihydroxy-3-methylpentanoate + NADP(+) = (S)-2-ethyl-2-hydroxy-3-oxobutanoate + NADPH + H(+). Its pathway is amino-acid biosynthesis; L-isoleucine biosynthesis; L-isoleucine from 2-oxobutanoate: step 2/4. The protein operates within amino-acid biosynthesis; L-valine biosynthesis; L-valine from pyruvate: step 2/4. Functionally, involved in the biosynthesis of branched-chain amino acids (BCAA). Catalyzes an alkyl-migration followed by a ketol-acid reduction of (S)-2-acetolactate (S2AL) to yield (R)-2,3-dihydroxy-isovalerate. In the isomerase reaction, S2AL is rearranged via a Mg-dependent methyl migration to produce 3-hydroxy-3-methyl-2-ketobutyrate (HMKB). In the reductase reaction, this 2-ketoacid undergoes a metal-dependent reduction by NADPH to yield (R)-2,3-dihydroxy-isovalerate. In Neisseria meningitidis serogroup A / serotype 4A (strain DSM 15465 / Z2491), this protein is Ketol-acid reductoisomerase (NADP(+)).